The primary structure comprises 329 residues: GTPase Obg (329 aa).

Residues 1-159 (MQFIDQARIT…WPLQLELKLL (159 aa)) form the Obg domain. An OBG-type G domain is found at 160–328 (AEVGIIGLPN…LLDQVWQLLG (169 aa)). ATP contacts are provided by residues 166-173 (GLPNAGKS), 191-195 (FTTLV), 213-216 (DIPG), 280-283 (NKLE), and 309-311 (SAV). Residues S173 and T193 each contribute to the Mg(2+) site.

It belongs to the TRAFAC class OBG-HflX-like GTPase superfamily. OBG GTPase family. As to quaternary structure, monomer. Mg(2+) is required as a cofactor.

The protein localises to the cytoplasm. An essential GTPase which binds GTP, GDP and possibly (p)ppGpp with moderate affinity, with high nucleotide exchange rates and a fairly low GTP hydrolysis rate. Plays a role in control of the cell cycle, stress response, ribosome biogenesis and in those bacteria that undergo differentiation, in morphogenesis control. The chain is GTPase Obg from Synechococcus sp. (strain WH7803).